Here is a 379-residue protein sequence, read N- to C-terminus: Putative cyclic ADP-D-ribose synthase TIR2 (379 aa).

One can recognise a TIR domain in the interval 254 to 379 (KVYDVFISHS…TISWTTGLVK (126 aa)). Residue Glu-335 is part of the active site.

In terms of assembly, homodimer.

It is found in the cytoplasm. Activated upon phage infection. Functionally, one of 2 TIR-like protein components of the Thoeris antiviral defense system, composed of ThsA, TIR1 (thsB1) and TIR2 (thsB2). Phage infection activates this protein; by 70 minutes post-infection with phage SPO1, TIR2 generates a signal molecule that in turn activates the NAD(+) hydrolase activity of ThsA (tested with B.cereus). The signal is similar to cyclic ADP-D-ribose, but how it differs is unknown. Expression of Thoeris in B.subtilis (strain BEST7003) confers resistance to phages phi29, phi3T, SPBeta, SBSphi11, SBSphi13, SBSphiJ, SPO1 and SPR but not SBSphiC. The TIR paralogs confer resistance to different phages; this subunit confers resistance to phi3T, SPBeta, SBSphi13, SBSphiJ, SPO1 and SPR but not phi29, SBSphi11 or SBSphiC. There is overlap in the phage range for this system, both TIR1 and TIR2 are activated by SBSphi13, SBSphiJ, SPO1 and SPR. Probably hydrolyzes NAD(+) to make a cyclic ADP-D-ribose (cADPR) signaling molecule; might make 3'cADPR. This chain is Putative cyclic ADP-D-ribose synthase TIR2, found in Cytobacillus dafuensis (Bacillus dafuensis).